The chain runs to 279 residues: Conserved oligomeric Golgi complex subunit 7 (279 aa).

Component of the conserved oligomeric Golgi (COG or Sec34/Sec35) complex which consists of eight different proteins COG1-COG8.

The protein resides in the golgi apparatus membrane. Its function is as follows. Acts as a component of the peripheral membrane COG complex that is involved in intra-Golgi protein trafficking. COG is located at the cis-Golgi, and regulates tethering of retrograde intra-Golgi vesicles and possibly a number of other membrane trafficking events. This Saccharomyces cerevisiae (strain ATCC 204508 / S288c) (Baker's yeast) protein is Conserved oligomeric Golgi complex subunit 7 (COG7).